We begin with the raw amino-acid sequence, 556 residues long: Amidophosphoribosyltransferase (556 aa).

Residues 1 to 57 constitute a propeptide that is removed on maturation; that stretch reads MCLAVGVGVRAPKHVPQIRRLGRAGRRLRCVTNCALGSCPIVTVQQPGRDFSSPREE. Cysteine 58 functions as the Nucleophile in the catalytic mechanism. Residues 58–284 form the Glutamine amidotransferase type-2 domain; sequence CGVFGVWAPG…PGELLAIDAD (227 aa). Cysteine 299 provides a ligand contact to [4Fe-4S] cluster. 3 residues coordinate Mg(2+): serine 346, aspartate 408, and aspartate 409. Cysteine 445, cysteine 501, and cysteine 504 together coordinate [4Fe-4S] cluster.

In the C-terminal section; belongs to the purine/pyrimidine phosphoribosyltransferase family. Mg(2+) serves as cofactor. Requires [4Fe-4S] cluster as cofactor.

It catalyses the reaction 5-phospho-beta-D-ribosylamine + L-glutamate + diphosphate = 5-phospho-alpha-D-ribose 1-diphosphate + L-glutamine + H2O. It participates in purine metabolism; IMP biosynthesis via de novo pathway; N(1)-(5-phospho-D-ribosyl)glycinamide from 5-phospho-alpha-D-ribose 1-diphosphate: step 1/2. Catalyzes the formation of phosphoribosylamine from phosphoribosylpyrophosphate (PRPP) and glutamine. The protein is Amidophosphoribosyltransferase of Mycobacterium leprae (strain TN).